The chain runs to 458 residues: tRNA modification GTPase MnmE (458 aa).

(6S)-5-formyl-5,6,7,8-tetrahydrofolate contacts are provided by Arg-26, Glu-88, and Arg-127. One can recognise a TrmE-type G domain in the interval 224-378 (GLSTAIIGRP…IEERINDIFF (155 aa)). Asn-234 is a binding site for K(+). GTP is bound by residues 234–239 (NVGKSS), 253–259 (TDIEGTT), and 278–281 (DTAG). Ser-238 provides a ligand contact to Mg(2+). Positions 253, 255, and 258 each coordinate K(+). Mg(2+) is bound at residue Thr-259. Lys-458 serves as a coordination point for (6S)-5-formyl-5,6,7,8-tetrahydrofolate.

Belongs to the TRAFAC class TrmE-Era-EngA-EngB-Septin-like GTPase superfamily. TrmE GTPase family. As to quaternary structure, homodimer. Heterotetramer of two MnmE and two MnmG subunits. It depends on K(+) as a cofactor.

The protein resides in the cytoplasm. In terms of biological role, exhibits a very high intrinsic GTPase hydrolysis rate. Involved in the addition of a carboxymethylaminomethyl (cmnm) group at the wobble position (U34) of certain tRNAs, forming tRNA-cmnm(5)s(2)U34. This is tRNA modification GTPase MnmE from Streptococcus agalactiae serotype III (strain NEM316).